Consider the following 221-residue polypeptide: GTP-binding nuclear protein Ran-2 (221 aa).

The Small GTPase Ran-type domain maps to 10–174 (DYPSFKLVIV…LYLARKLAGD (165 aa)). Residue 21 to 28 (DGGTGKTT) participates in GTP binding. The segment at 40 to 48 (KKYEPTIGV) is switch-I. Residues Gly71, 125-128 (NKVD), and 153-155 (SAK) contribute to the GTP site. Residues 71 to 87 (GQEKFGGLRDGYYIHGQ) form a switch-II region. Over residues 202–212 (ADLAAAAAQPL) the composition is skewed to low complexity. Positions 202-221 (ADLAAAAAQPLPDDDDDAFE) are disordered.

Belongs to the small GTPase superfamily. Ran family. As to quaternary structure, found in a nuclear export complex with RanGTP, exportin and pre-miRNA. Interacts with RanBP1a and RanBP1b. Interacts with PHRIP1. Interacts with KPNB1. Binds to PHIP1.

The protein localises to the nucleus. The protein resides in the nucleus envelope. In terms of biological role, GTP-binding protein involved in nucleocytoplasmic transport. Required for the import of protein into the nucleus and also for RNA export. Involved in chromatin condensation and control of cell cycle. This Arabidopsis thaliana (Mouse-ear cress) protein is GTP-binding nuclear protein Ran-2.